The chain runs to 252 residues: tRNA (guanine-N(1)-)-methyltransferase (252 aa).

S-adenosyl-L-methionine contacts are provided by residues glycine 113 and 133–138; that span reads LGDYVL.

It belongs to the RNA methyltransferase TrmD family. As to quaternary structure, homodimer.

The protein localises to the cytoplasm. It carries out the reaction guanosine(37) in tRNA + S-adenosyl-L-methionine = N(1)-methylguanosine(37) in tRNA + S-adenosyl-L-homocysteine + H(+). Its function is as follows. Specifically methylates guanosine-37 in various tRNAs. The chain is tRNA (guanine-N(1)-)-methyltransferase from Stenotrophomonas maltophilia (strain R551-3).